Here is a 306-residue protein sequence, read N- to C-terminus: MTTDWAEIACEVPAEMVDTLADFLVELTGNGVGIDNLHLDTFSLDTLEDTPLKSVKGYLPLDDSLEEMRIRIEQFLAQTGPSFPGYVYAPPVVTVIRNEDWANNWKVHFKPVRIGRRLVIKPTWEEYLKQEGDLVIQIDPGMAFGTGAHPTTKMCLEALERIGFYAHGGKLPSPVLDVGTGSGVLSIAAALLGAEEIVAVDIDPEAVRVTVENLELNGMADRVAPSTTSLEQLPGGFQVVVANILAEELVRLAGELTARVAPGGWLILSGILTEKEAFVCAAFSSLELVENPKELEWSCLSFRKPL.

S-adenosyl-L-methionine is bound by residues T152, G179, D201, and N243.

The protein belongs to the methyltransferase superfamily. PrmA family.

The protein localises to the cytoplasm. The enzyme catalyses L-lysyl-[protein] + 3 S-adenosyl-L-methionine = N(6),N(6),N(6)-trimethyl-L-lysyl-[protein] + 3 S-adenosyl-L-homocysteine + 3 H(+). Its function is as follows. Methylates ribosomal protein L11. This chain is Ribosomal protein L11 methyltransferase, found in Geobacter sp. (strain M21).